The primary structure comprises 295 residues: Methionine aminopeptidase (295 aa).

His-63 is a substrate binding site. 3 residues coordinate a divalent metal cation: Asp-83, Asp-94, and His-154. Substrate is bound at residue His-162. A divalent metal cation-binding residues include Glu-188 and Glu-281.

The protein belongs to the peptidase M24A family. Methionine aminopeptidase archaeal type 2 subfamily. In terms of assembly, monomer. The cofactor is Co(2+). Zn(2+) is required as a cofactor. It depends on Mn(2+) as a cofactor. Requires Fe(2+) as cofactor.

It catalyses the reaction Release of N-terminal amino acids, preferentially methionine, from peptides and arylamides.. Removes the N-terminal methionine from nascent proteins. The N-terminal methionine is often cleaved when the second residue in the primary sequence is small and uncharged (Met-Ala-, Cys, Gly, Pro, Ser, Thr, or Val). The protein is Methionine aminopeptidase of Thermococcus kodakarensis (strain ATCC BAA-918 / JCM 12380 / KOD1) (Pyrococcus kodakaraensis (strain KOD1)).